A 436-amino-acid polypeptide reads, in one-letter code: GTPase Der (436 aa).

2 consecutive EngA-type G domains span residues 4–167 (PTVA…PVEE) and 175–351 (IRFS…ESQN). Residues 10–17 (GRPNVGKS), 57–61 (DTGGI), 119–122 (NKVD), 181–188 (GRPNVGKS), 229–233 (DTAGM), and 294–297 (NKWD) each bind GTP. The KH-like domain occupies 352–436 (KRIPSAVLND…PIHLIARKRK (85 aa)).

Belongs to the TRAFAC class TrmE-Era-EngA-EngB-Septin-like GTPase superfamily. EngA (Der) GTPase family. In terms of assembly, associates with the 50S ribosomal subunit.

Functionally, GTPase that plays an essential role in the late steps of ribosome biogenesis. The polypeptide is GTPase Der (Streptococcus pyogenes serotype M2 (strain MGAS10270)).